Reading from the N-terminus, the 150-residue chain is Large ribosomal subunit protein uL13 (150 aa).

A disordered region spans residues 130–150 (EHPHSAQNPQVLSITTNELVK). The segment covering 134 to 150 (SAQNPQVLSITTNELVK) has biased composition (polar residues).

The protein belongs to the universal ribosomal protein uL13 family. In terms of assembly, part of the 50S ribosomal subunit.

Its function is as follows. This protein is one of the early assembly proteins of the 50S ribosomal subunit, although it is not seen to bind rRNA by itself. It is important during the early stages of 50S assembly. This is Large ribosomal subunit protein uL13 from Prochlorococcus marinus (strain SARG / CCMP1375 / SS120).